A 1023-amino-acid polypeptide reads, in one-letter code: 2-oxoglutarate dehydrogenase complex component E1 (1023 aa).

Residues 1–40 (MFHLRTCAAKLRPLTASQTVKTFSQNRPAAARTFQQIRCY) constitute a mitochondrion transit peptide. At lysine 74 the chain carries N6-succinyllysine. Residue serine 100 is modified to Phosphoserine. The Ca(2+) site is built by histidine 143, aspartate 156, and aspartate 158. A thiamine diphosphate-binding site is contributed by arginine 312. Lysine 401 is subject to N6-acetyllysine. Thiamine diphosphate-binding residues include aspartate 411, asparagine 444, and isoleucine 446. 3 residues coordinate Mg(2+): aspartate 411, asparagine 444, and isoleucine 446. Lysine 534 is covalently cross-linked (Glycyl lysine isopeptide (Lys-Gly) (interchain with G-Cter in ubiquitin)). N6-succinyllysine is present on lysine 564. Residue glutamine 676 coordinates thiamine diphosphate. Lysine 970 bears the N6-acetyllysine mark.

This sequence belongs to the alpha-ketoglutarate dehydrogenase family. As to quaternary structure, homodimer. The 2-oxoglutarate dehydrogenase complex is composed of OGDH (2-oxoglutarate dehydrogenase; E1), DLST (dihydrolipoamide succinyltransferase; E2), DLD (dihydrolipoamide dehydrogenase; E3) and the assembly factor KGD4. It contains multiple copies of the three enzymatic components (E1, E2 and E3). In the nucleus, the 2-oxoglutarate dehydrogenase complex associates with KAT2A. Interacts with ABHD11; this interaction maintains the functional lipoylation of the 2-oxoglutarate dehydrogenase complex. It depends on thiamine diphosphate as a cofactor. Mg(2+) is required as a cofactor.

Its subcellular location is the mitochondrion. The protein resides in the nucleus. It carries out the reaction N(6)-[(R)-lipoyl]-L-lysyl-[protein] + 2-oxoglutarate + H(+) = N(6)-[(R)-S(8)-succinyldihydrolipoyl]-L-lysyl-[protein] + CO2. Its activity is regulated as follows. Calcium ions and ADP stimulate, whereas ATP and NADH reduce catalytic activity. 2-oxoglutarate dehydrogenase (E1o) component of the 2-oxoglutarate dehydrogenase complex (OGDHC). Participates in the first step, rate limiting for the overall conversion of 2-oxoglutarate to succinyl-CoA and CO(2) catalyzed by the whole OGDHC. Catalyzes the irreversible decarboxylation of 2-oxoglutarate (alpha-ketoglutarate) via the thiamine diphosphate (ThDP) cofactor and subsequent transfer of the decarboxylated acyl intermediate on an oxidized dihydrolipoyl group that is covalently amidated to the E2 enzyme (dihydrolipoyllysine-residue succinyltransferase or DLST). Plays a key role in the Krebs (citric acid) cycle, which is a common pathway for oxidation of fuel molecules, including carbohydrates, fatty acids, and amino acids. Can catalyze the decarboxylation of 2-oxoadipate in vitro, but at a much lower rate than 2-oxoglutarate. Mainly active in the mitochondrion. A fraction of the 2-oxoglutarate dehydrogenase complex also localizes in the nucleus and is required for lysine succinylation of histones: associates with KAT2A on chromatin and provides succinyl-CoA to histone succinyltransferase KAT2A. The chain is 2-oxoglutarate dehydrogenase complex component E1 from Pongo abelii (Sumatran orangutan).